Here is an 85-residue protein sequence, read N- to C-terminus: UPF0297 protein Cbei_1105 (85 aa).

The protein belongs to the UPF0297 family.

The chain is UPF0297 protein Cbei_1105 from Clostridium beijerinckii (strain ATCC 51743 / NCIMB 8052) (Clostridium acetobutylicum).